Reading from the N-terminus, the 239-residue chain is Fatty acid metabolism regulator protein (239 aa).

An HTH gntR-type domain is found at 6-74 (KGPASFAEKY…HGKPTRVNNF (69 aa)). Residues 34 to 53 (ERELSELIGVTRTTLREVLQ) constitute a DNA-binding region (H-T-H motif).

As to quaternary structure, homodimer.

The protein resides in the cytoplasm. Multifunctional regulator of fatty acid metabolism. In Shewanella halifaxensis (strain HAW-EB4), this protein is Fatty acid metabolism regulator protein.